The sequence spans 106 residues: Large ribosomal subunit protein P1A (106 aa).

The segment at Ala-74–Asp-106 is disordered. Over residues Glu-82–Met-100 the composition is skewed to acidic residues.

The protein belongs to the eukaryotic ribosomal protein P1/P2 family. In terms of assembly, component of the large ribosomal subunit (LSU). Mature ribosomes consist of a small (40S) and a large (60S) subunit. The 40S subunit contains about 32 different proteins and 1 molecule of RNA (18S). The 60S subunit contains 45 different proteins and 3 molecules of RNA (25S, 5.8S and 5S). The 5 acidic ribosomal P-proteins form the stalk structure of the 60S subunit. They are organized as a pentameric complex in which uL10/P0 interacts with 2 heterodimers, P1A-P2B and P1B-P2A. In terms of processing, phosphorylated.

It localises to the cytoplasm. Component of the ribosome, a large ribonucleoprotein complex responsible for the synthesis of proteins in the cell. The small ribosomal subunit (SSU) binds messenger RNAs (mRNAs) and translates the encoded message by selecting cognate aminoacyl-transfer RNA (tRNA) molecules. The large subunit (LSU) contains the ribosomal catalytic site termed the peptidyl transferase center (PTC), which catalyzes the formation of peptide bonds, thereby polymerizing the amino acids delivered by tRNAs into a polypeptide chain. The nascent polypeptides leave the ribosome through a tunnel in the LSU and interact with protein factors that function in enzymatic processing, targeting, and the membrane insertion of nascent chains at the exit of the ribosomal tunnel. This Candida albicans (strain SC5314 / ATCC MYA-2876) (Yeast) protein is Large ribosomal subunit protein P1A (RPP1A).